Here is a 615-residue protein sequence, read N- to C-terminus: ATP-dependent RNA helicase DBP9 (615 aa).

Residues 1-37 form a disordered region; it reads MSASTKRKRDQAEESVPAENPASTDVEKAIKPAQKQE. The segment covering 25 to 37 has biased composition (basic and acidic residues); the sequence is DVEKAIKPAQKQE. The Q motif motif lies at 40-68; the sequence is TSFVDLGLDPRLLQAIAQQKFAKPTLVQR. The region spanning 71–248 is the Helicase ATP-binding domain; it reads IPLALNGQDV…GIFRRDPTLL (178 aa). 84–91 contacts ATP; the sequence is ADCGSGKT. The DEAD box motif lies at 196–199; it reads DEAD. Residues 259–491 form the Helicase C-terminal domain; that stretch reads GITQFVAKCG…PYNFNMKQVD (233 aa). Positions 351-363 are enriched in acidic residues; the sequence is GDDEEPAETAEAQ. Disordered stretches follow at residues 351–396 and 583–615; these read GDDE…DKEY and KDKKGKGKKGRGFKVGSRKRDPLKTFKARRKTK. Residues 583–594 are compositionally biased toward basic residues; sequence KDKKGKGKKGRG.

This sequence belongs to the DEAD box helicase family. DDX56/DBP9 subfamily.

Its subcellular location is the nucleus. The protein localises to the nucleolus. It catalyses the reaction ATP + H2O = ADP + phosphate + H(+). Its function is as follows. ATP-binding RNA helicase involved in the biogenesis of 60S ribosomal subunits and is required for the normal formation of 25S and 5.8S rRNAs. This chain is ATP-dependent RNA helicase DBP9 (DBP9), found in Gibberella zeae (strain ATCC MYA-4620 / CBS 123657 / FGSC 9075 / NRRL 31084 / PH-1) (Wheat head blight fungus).